The sequence spans 324 residues: MQSTQPIQRCVLGSQQALPELAVSLLDNLGLITMTGNDKKSYLQGQVTCDVVSLETDQVTWGGHCDAKGKLWSVFRLFHYADGYAMLQDKSAIDVELRELKKYAVFAKVEINVSDAILLGVCGVQAEQAIAKLTNNAEAAVVTFAQGTAVKISPQRWLLVVDANQQDEVLAMLATAPLCDHALWDLYDILEVAPRIPAFAQNEHIPQAVNLQAVNGISFKKGCYTGQETVARAKYRGINKRALYRLSGTIAPSAPETTISLERSVGDNWRAAGEALVSYHFDDGRATGLFVLPNDLEPETQFRLAGQSEQLWQREPLPYSLDDE.

W184 contacts folate.

Belongs to the tRNA-modifying YgfZ family.

It is found in the cytoplasm. Folate-binding protein involved in regulating the level of ATP-DnaA and in the modification of some tRNAs. It is probably a key factor in regulatory networks that act via tRNA modification, such as initiation of chromosomal replication. The sequence is that of tRNA-modifying protein YgfZ from Vibrio vulnificus (strain CMCP6).